A 708-amino-acid chain; its full sequence is Polyribonucleotide nucleotidyltransferase (708 aa).

Residues aspartate 486 and aspartate 492 each contribute to the Mg(2+) site. The KH domain maps to 553-612; that stretch reads PRITTIKVPPQKVREVIGSGGKVIREITEVTGTKIDIEDDGTIKIASADAEATQRAVDWI. Residues 622-690 form the S1 motif domain; sequence GVVYTGKVVK…DRGKIKLSMK (69 aa).

The protein belongs to the polyribonucleotide nucleotidyltransferase family. Mg(2+) serves as cofactor.

It is found in the cytoplasm. It carries out the reaction RNA(n+1) + phosphate = RNA(n) + a ribonucleoside 5'-diphosphate. Functionally, involved in mRNA degradation. Catalyzes the phosphorolysis of single-stranded polyribonucleotides processively in the 3'- to 5'-direction. In Rhodospirillum rubrum (strain ATCC 11170 / ATH 1.1.1 / DSM 467 / LMG 4362 / NCIMB 8255 / S1), this protein is Polyribonucleotide nucleotidyltransferase.